Consider the following 338-residue polypeptide: Heat-inducible transcription repressor HrcA (338 aa).

Belongs to the HrcA family.

Functionally, negative regulator of class I heat shock genes (grpE-dnaK-dnaJ and groELS operons). Prevents heat-shock induction of these operons. This is Heat-inducible transcription repressor HrcA from Nitrosomonas europaea (strain ATCC 19718 / CIP 103999 / KCTC 2705 / NBRC 14298).